We begin with the raw amino-acid sequence, 209 residues long: Ubiquitin-conjugating enzyme E2 S (209 aa).

Residues 14 to 160 (QTIRQVMREL…ARMMTEIHAQ (147 aa)) form the UBC core domain. Cys98 acts as the Glycyl thioester intermediate in catalysis. The disordered stretch occupies residues 164-209 (CAAGAAGDSKDDDGPSTKKHAGLDKKLQDKKKEKLLKEKKRMLKRL). Positions 171–199 (DSKDDDGPSTKKHAGLDKKLQDKKKEKLL) are enriched in basic and acidic residues. The segment covering 200-209 (KEKKRMLKRL) has biased composition (basic residues).

The protein belongs to the ubiquitin-conjugating enzyme family.

It carries out the reaction S-ubiquitinyl-[E1 ubiquitin-activating enzyme]-L-cysteine + [E2 ubiquitin-conjugating enzyme]-L-cysteine = [E1 ubiquitin-activating enzyme]-L-cysteine + S-ubiquitinyl-[E2 ubiquitin-conjugating enzyme]-L-cysteine.. It participates in protein modification; protein ubiquitination. Its function is as follows. Catalyzes the covalent attachment of ubiquitin to other proteins. Acts as an essential factor of the anaphase promoting complex/cyclosome (APC/C), a cell cycle-regulated ubiquitin ligase that controls progression through mitosis. Acts by specifically elongating polyubiquitin chains initiated by the E2 enzyme vih/UbcH10 on APC/C substrates, enhancing the degradation of APC/C substrates by the proteasome and promoting mitotic exit. This chain is Ubiquitin-conjugating enzyme E2 S, found in Drosophila ananassae (Fruit fly).